The following is a 336-amino-acid chain: NmrA-like family domain-containing oxidoreductase malD (336 aa).

Residues 12–17, 40–44, 61–62, 82–84, K140, and 163–166 each bind NADP(+); these read GGTGNQ, RDPTS, DG, TNS, and FMEA.

Belongs to the NmrA-type oxidoreductase family.

Its function is as follows. NmrA-like family domain-containing oxidoreductase; part of the gene cluster that mediates the biosynthesis of malbrancheamide, a dichlorinated fungal indole alkaloid that belongs to a family of natural products containing a characteristic bicyclo[2.2.2]diazaoctane core. The first step of malbrancheamide biosynthesis involves coupling of L-proline and L-tryptophan by malG, a bimodular NRPS, to produce L-Pro-L-Trp aldehyde through reductive offloading. This compound undergoes spontaneous cyclization and dehydration to give a dienamine which is reverse prenylated at C-2 by malE. The other prenyltransferase present in the cluster, malB, displays modest activity, suggesting that may be a redundant gene in the pathway. Subsequently, a [4+2] Diels-Alder cyclo-addition catalyzed by the bifunctional enzyme malC forms the characteristic bicyclo[2.2.2]diazaoctane ring of premalbrancheamid. Finally, the flavin-dependent halogenase malA catalyzes the iterative dichlorination of the indole ring of premalbrancheamide to yield C-9 monochlorinated malbrancheamide B, C-8 monochlorinated isomalbrancheamide B, and dichlorinated malbrancheamide. MalA is also able to brominate premalbrancheamide at C-9 to yield malbrancheamide C, and, to a lesser extend, at C-8 to yield isomalbrancheamide C. Finally, malA can brominate C-9 monochlorinated malbrancheamide B at C-8 to yield malbrancheamide D, or C-8 monochlorinated isomalbrancheamide B at C-9 to produce isomalbrancheamide D. The protein is NmrA-like family domain-containing oxidoreductase malD of Malbranchea aurantiaca.